The sequence spans 230 residues: Cytidylate kinase (230 aa).

12-20 (GPSGAGKGT) is a binding site for ATP.

It belongs to the cytidylate kinase family. Type 1 subfamily.

It is found in the cytoplasm. It carries out the reaction CMP + ATP = CDP + ADP. The enzyme catalyses dCMP + ATP = dCDP + ADP. In Shewanella piezotolerans (strain WP3 / JCM 13877), this protein is Cytidylate kinase.